Here is a 426-residue protein sequence, read N- to C-terminus: D-tagatose-1,6-bisphosphate aldolase subunit KbaZ (426 aa).

It belongs to the GatZ/KbaZ family. KbaZ subfamily. Forms a complex with KbaY.

Its pathway is carbohydrate metabolism; D-tagatose 6-phosphate degradation; D-glyceraldehyde 3-phosphate and glycerone phosphate from D-tagatose 6-phosphate: step 2/2. In terms of biological role, component of the tagatose-1,6-bisphosphate aldolase KbaYZ that is required for full activity and stability of the Y subunit. Could have a chaperone-like function for the proper and stable folding of KbaY. When expressed alone, KbaZ does not show any aldolase activity. The sequence is that of D-tagatose-1,6-bisphosphate aldolase subunit KbaZ from Escherichia coli O1:K1 / APEC.